Reading from the N-terminus, the 467-residue chain is Methylenetetrahydrofolate--tRNA-(uracil-5-)-methyltransferase TrmFO (467 aa).

Position 10 to 15 (glycine 10 to glycine 15) interacts with FAD.

Belongs to the MnmG family. TrmFO subfamily. The cofactor is FAD.

It is found in the cytoplasm. The enzyme catalyses uridine(54) in tRNA + (6R)-5,10-methylene-5,6,7,8-tetrahydrofolate + NADH + H(+) = 5-methyluridine(54) in tRNA + (6S)-5,6,7,8-tetrahydrofolate + NAD(+). It catalyses the reaction uridine(54) in tRNA + (6R)-5,10-methylene-5,6,7,8-tetrahydrofolate + NADPH + H(+) = 5-methyluridine(54) in tRNA + (6S)-5,6,7,8-tetrahydrofolate + NADP(+). In terms of biological role, catalyzes the folate-dependent formation of 5-methyl-uridine at position 54 (M-5-U54) in all tRNAs. The chain is Methylenetetrahydrofolate--tRNA-(uracil-5-)-methyltransferase TrmFO from Prochlorococcus marinus (strain MIT 9515).